A 363-amino-acid polypeptide reads, in one-letter code: Ferrochelatase (363 aa).

Residues His209 and Glu290 each coordinate Fe cation.

Belongs to the ferrochelatase family.

Its subcellular location is the cytoplasm. It carries out the reaction heme b + 2 H(+) = protoporphyrin IX + Fe(2+). It functions in the pathway porphyrin-containing compound metabolism; protoheme biosynthesis; protoheme from protoporphyrin-IX: step 1/1. In terms of biological role, catalyzes the ferrous insertion into protoporphyrin IX. This chain is Ferrochelatase, found in Azoarcus sp. (strain BH72).